A 398-amino-acid chain; its full sequence is Putative tyrosine-protein phosphatase C15H7.3 (398 aa).

Residues 1 to 15 (MERSQKSARKKKKTS) show a composition bias toward basic residues. The interval 1–114 (MERSQKSARK…EPWSEEEPAK (114 aa)) is disordered. A compositionally biased stretch (basic and acidic residues) spans 18 to 40 (GNDRSIRSERKSKQKKPAGEKSQ). Over residues 41–50 (KSRRTRKSRG) the composition is skewed to basic residues. The span at 55–73 (GFTSRETIQPSSSGQSEGT) shows a compositional bias: polar residues. Over residues 74–114 (TRMDDQKDEKKDDKKEEKKEERKEEKKEEVKEPWSEEEPAK) the composition is skewed to basic and acidic residues. Residues 125 to 376 (TNVGGTFKQT…GTVHRSMACW (252 aa)) form the Tyrosine-protein phosphatase domain.

This sequence belongs to the protein-tyrosine phosphatase family. Non-receptor class subfamily.

It carries out the reaction O-phospho-L-tyrosyl-[protein] + H2O = L-tyrosyl-[protein] + phosphate. The protein is Putative tyrosine-protein phosphatase C15H7.3 of Caenorhabditis elegans.